The following is a 428-amino-acid chain: Somatostatin receptor type 3 (428 aa).

Over residues 1 to 12 the composition is skewed to polar residues; the sequence is MATVTYPSSEPT. Residues 1–20 form a disordered region; it reads MATVTYPSSEPTTLDPGNAS. At 1–45 the chain is on the extracellular side; it reads MATVTYPSSEPTTLDPGNASSTWPLDTTLGNTSAGASLTGLAVSG. Asn18 and Asn31 each carry an N-linked (GlcNAc...) asparagine glycan. A helical transmembrane segment spans residues 46 to 71; that stretch reads ILISLVYLVVCVVGLLGNSLVIYVVL. Over 72-81 the chain is Cytoplasmic; sequence RHTSSPSVTS. Residues 82–103 traverse the membrane as a helical segment; the sequence is VYILNLALADELFMLGLPFLAA. The Extracellular portion of the chain corresponds to 104–118; the sequence is QNALSYWPFGSLMCR. The cysteines at positions 117 and 192 are disulfide-linked. The chain crosses the membrane as a helical span at residues 119 to 140; that stretch reads LVMAVDGINQFTSIFCLTVMSV. Over 141 to 162 the chain is Cytoplasmic; that stretch reads DRYLAVVHPTRSARWRTAPVAR. Residues 163-182 traverse the membrane as a helical segment; that stretch reads TVSAAVWVASAVVVLPVVVF. At 183 to 206 the chain is on the extracellular side; that stretch reads SGVPRGMSTCHMQWPEPAAAWRTA. A helical membrane pass occupies residues 207–232; the sequence is FIIYTAALGFFGPLLVICLCYLLIVV. The Cytoplasmic portion of the chain corresponds to 233-266; the sequence is KVRSTTRRVRAPSCQWVQAPACQRRRRSERRVTR. A helical transmembrane segment spans residues 267-288; sequence MVVAVVALFVLCWMPFYLLNIV. Residues 289–302 lie on the Extracellular side of the membrane; sequence NVVCPLPEEPAFFG. Residues 303-325 form a helical membrane-spanning segment; that stretch reads LYFLVVALPYANSCANPILYGFL. Residues 326 to 428 are Cytoplasmic-facing; that stretch reads SYRFKQGFRR…GDKASTLSHL (103 aa). Phosphoserine is present on residues Ser341, Ser346, and Ser351. The tract at residues 344–428 is disordered; the sequence is IRSQEPGSGP…GDKASTLSHL (85 aa). Position 357 is a phosphothreonine (Thr357). Positions 357–370 are enriched in acidic residues; it reads TEEEEDEEEEERRE. Residues 385-412 show a composition bias toward polar residues; it reads RLSQIAQAGTSGQQPRPCTGTAKEQQLL.

This sequence belongs to the G-protein coupled receptor 1 family. Homodimer and heterodimer with SSTR2. Heterodimerization with SSTR2 inactivates SSTR3 receptor function. Post-translationally, phosphorylated. Phosphorylation increases upon somatostatin binding. As to expression, in the brain, primarily observed in the forebrain. Moderate levels found throughout laminae 2-6 of the neocortex and allocortex, and high levels in lamina 2 of the piriform and entorhinal cortices. High levels also present in the cornu ammonis fields of the hippocampus. In the amygdala, highly expressed in the nucleus of the lateral olfactory tract with expression also detected in the rostral portions of the basal magnocellular and lateral nuclei. In the diencephalon, moderate levels observed in the ventromedial and arcuate nuclei of the hypothalamus. In the midbrain, moderate levels found in the lateral portion of the substantia nigra pars reticulata.

It localises to the cell membrane. Functionally, receptor for somatostatin-14 and -28. This receptor is coupled via pertussis toxin sensitive G proteins to inhibition of adenylyl cyclase. This is Somatostatin receptor type 3 (Sstr3) from Mus musculus (Mouse).